The following is a 111-amino-acid chain: Aspartate 1-decarboxylase (111 aa).

The active-site Schiff-base intermediate with substrate; via pyruvic acid is Ser25. A Pyruvic acid (Ser) modification is found at Ser25. Thr57 provides a ligand contact to substrate. Tyr58 (proton donor) is an active-site residue. 73-75 is a binding site for substrate; that stretch reads GPA.

Belongs to the PanD family. Heterooctamer of four alpha and four beta subunits. Requires pyruvate as cofactor. In terms of processing, is synthesized initially as an inactive proenzyme, which is activated by self-cleavage at a specific serine bond to produce a beta-subunit with a hydroxyl group at its C-terminus and an alpha-subunit with a pyruvoyl group at its N-terminus.

Its subcellular location is the cytoplasm. It catalyses the reaction L-aspartate + H(+) = beta-alanine + CO2. The protein operates within cofactor biosynthesis; (R)-pantothenate biosynthesis; beta-alanine from L-aspartate: step 1/1. Catalyzes the pyruvoyl-dependent decarboxylation of aspartate to produce beta-alanine. This chain is Aspartate 1-decarboxylase, found in Francisella tularensis subsp. novicida (strain U112).